A 367-amino-acid chain; its full sequence is Flagellar P-ring protein (367 aa).

The first 24 residues, 1 to 24, serve as a signal peptide directing secretion; the sequence is MLRPIITLLCLTLMLCTAAGPAGA.

This sequence belongs to the FlgI family. As to quaternary structure, the basal body constitutes a major portion of the flagellar organelle and consists of four rings (L,P,S, and M) mounted on a central rod.

Its subcellular location is the periplasm. The protein resides in the bacterial flagellum basal body. Its function is as follows. Assembles around the rod to form the L-ring and probably protects the motor/basal body from shearing forces during rotation. The protein is Flagellar P-ring protein of Syntrophotalea carbinolica (strain DSM 2380 / NBRC 103641 / GraBd1) (Pelobacter carbinolicus).